The chain runs to 533 residues: Basal body-orientation factor 1 (533 aa).

Positions 1–30 (MPAKDKRKDKRKDKRKGKNKGKEPKKIIKS) are disordered. The segment covering 7 to 19 (RKDKRKDKRKGKN) has biased composition (basic residues). A compositionally biased stretch (basic and acidic residues) spans 20–30 (KGKEPKKIIKS). Coiled coils occupy residues 34-207 (AIER…EAEK) and 246-368 (LKEA…VEQF). Positions 277-533 (VKEKIMQLTQ…PQGLQDSDIA (257 aa)) are interaction with MNS1 and ODF2. Residues 507–517 (QQAPVSDSNRM) show a composition bias toward polar residues. The disordered stretch occupies residues 507 to 533 (QQAPVSDSNRMVSPDVIPQGLQDSDIA).

It belongs to the BBOF1 family. Interacts with MNS1 and ODF2. Expressed exclusively in the testis and predominantly expressed in male germ cells.

It is found in the cytoplasm. The protein resides in the cytoskeleton. It localises to the cilium basal body. The protein localises to the flagellum axoneme. Its function is as follows. Plays an essential role in sperm motility and male fertility by stabilizing the sperm flagellar axonemal structure. May be required for the stability of ODF2 and MANS1 proteins. Dispensable for the assembly and function of motile cilia. In Mus musculus (Mouse), this protein is Basal body-orientation factor 1.